We begin with the raw amino-acid sequence, 548 residues long: uncharacterized protein (548 aa).

A phosphoserine mark is found at Ser-19 and Ser-25. Thr-47 carries the phosphothreonine modification.

This is an uncharacterized protein from Schizosaccharomyces pombe (strain 972 / ATCC 24843) (Fission yeast).